A 1686-amino-acid chain; its full sequence is A disintegrin and metalloproteinase with thrombospondin motifs 7 (1686 aa).

Residues 1 to 27 (MPGGPSPRSPAPLLRPLLLLLCALAPG) form the signal peptide. Positions 28 to 236 (APGPAPGRAT…RPRLRRLHQR (209 aa)) are excised as a propeptide. A glycan (N-linked (GlcNAc...) asparagine) is linked at asparagine 94. Residues 202-209 (STCGVQVY) carry the Cysteine switch motif. A Zn(2+)-binding site is contributed by cysteine 204. One can recognise a Peptidase M12B domain in the interval 242-452 (KWVETLVVAD…GWGLCLDDPP (211 aa)). 11 cysteine pairs are disulfide-bonded: cysteine 318–cysteine 372, cysteine 347–cysteine 354, cysteine 366–cysteine 447, cysteine 405–cysteine 431, cysteine 474–cysteine 497, cysteine 485–cysteine 503, cysteine 492–cysteine 522, cysteine 516–cysteine 527, cysteine 550–cysteine 587, cysteine 554–cysteine 592, and cysteine 565–cysteine 577. Position 388 (histidine 388) interacts with Zn(2+). Glutamate 389 is a catalytic residue. Zn(2+) contacts are provided by histidine 392 and histidine 398. The 76-residue stretch at 462 to 537 (VPPGVLYDVS…VPVGFRPEAV (76 aa)) folds into the Disintegrin domain. In terms of domain architecture, TSP type-1 1 spans 538–593 (DGGWSGWSAWSICSRSCGMGVQSAERQCTQPTPKYKGRYCVGERKRFRLCNLQACP). Residues asparagine 693 and asparagine 778 are each glycosylated (N-linked (GlcNAc...) asparagine). The tract at residues 698-809 (HTVSGTFEEA…PGVHYEYTIH (112 aa)) is spacer. TSP type-1 domains are found at residues 821–880 (PVFS…QPCP), 881–940 (ARWW…NRHV), and 942–995 (CPAT…PLCR). 3 disordered regions span residues 1024–1043 (HHLA…TMGN), 1080–1257 (PSEE…SPDV), and 1344–1396 (LGHM…PLAP). Over residues 1182–1205 (DGLQTPATPESQNDFPVGKDSQSQ) the composition is skewed to polar residues. The segment covering 1210-1226 (WRDRTNEVFKDDEEPKG) has biased composition (basic and acidic residues). The span at 1360-1375 (PESLSPEVPLSSRLLS) shows a compositional bias: low complexity. TSP type-1 domains lie at 1411-1459 (RNAG…RRCH), 1462-1522 (PCAT…QPCL), 1523-1567 (SWYT…PCNT), and 1569-1629 (PCTQ…EDCE). In terms of domain architecture, PLAC spans 1632-1672 (EPPRCERDRLSFGFCETLRLLGRCQLPTIRTQCCRSCSPPS). The segment at 1666 to 1686 (RSCSPPSHGAPSRGHQRVARR) is disordered.

As to quaternary structure, interacts with COMP. Zn(2+) serves as cofactor. In terms of processing, N-glycosylated. Can be O-fucosylated by POFUT2 on a serine or a threonine residue found within the consensus sequence C1-X(2)-(S/T)-C2-G of the TSP type-1 repeat domains where C1 and C2 are the first and second cysteine residue of the repeat, respectively. Fucosylated repeats can then be further glycosylated by the addition of a beta-1,3-glucose residue by the glucosyltransferase, B3GALTL. Fucosylation mediates the efficient secretion of ADAMTS family members. Can also be C-glycosylated with one or two mannose molecules on tryptophan residues within the consensus sequence W-X-X-W of the TPRs. N- and C-glycosylations can also facilitate secretion. O-glycosylated proteoglycan; contains chondroitin sulfate. Post-translationally, may be cleaved by a furin endopeptidase. The precursor is sequentially processed. Expressed in heart, brain, placenta, lung, liver, skeletal muscle, kidney and pancreas. Detected in meniscus, bone, tendon, cartilage, synovium, fat and ligaments.

The protein resides in the secreted. Its subcellular location is the extracellular space. It localises to the extracellular matrix. Its function is as follows. Metalloprotease. Was previously shown to degrade COMP. However, a later study found no activity against COMP. The chain is A disintegrin and metalloproteinase with thrombospondin motifs 7 (ADAMTS7) from Homo sapiens (Human).